We begin with the raw amino-acid sequence, 475 residues long: Fez family zinc finger protein 1 (475 aa).

The Engrailed homology 1 repressor signature appears at 28 to 43 (PLAFSIERIMARTPEP). C2H2-type zinc fingers lie at residues 260–282 (FTCEVCGKVFNAHYNLTRHMPVH), 288–310 (FVCKVCGKGFRQASTLCRHKIIH), 316–338 (HKCNQCGKAFNRSSTLNTHTRIH), 344–366 (FVCEFCGKGFHQKGNYKNHKLTH), 372–394 (FKCNICNKAFHQVYNLTFHMHTH), and 400–423 (FTCPTCGKGFCRNFDLKKHVRKLH). The tract at residues 425–475 (SSLGLTRTPTGEPSSDPPPQLQQPPPAPLPPLQPTLPPPGPLPSGLHQGHQ) is disordered. Residues 427 to 437 (LGLTRTPTGEP) are compositionally biased toward polar residues. Pro residues predominate over residues 439-466 (SDPPPQLQQPPPAPLPPLQPTLPPPGPL).

It belongs to the krueppel C2H2-type zinc-finger protein family.

The protein resides in the nucleus. Transcription repressor. Involved in the axonal projection and proper termination of olfactory sensory neurons (OSN). Plays a role in rostro-caudal patterning of the diencephalon and in prethalamic formation. Expression is required in OSN to cell-autonomously regulate OSN axon projections. Regulates non-cell-autonomously the layer formation of the olfactory bulb development and the interneurons. May be required for correct rostral migration of the interneuron progenitors. The protein is Fez family zinc finger protein 1 (Fezf1) of Mus musculus (Mouse).